Here is a 391-residue protein sequence, read N- to C-terminus: Small ribosomal subunit protein mS29 (391 aa).

Residues 1-17 constitute a mitochondrion transit peptide; the sequence is MLTGITRLFSRVQKLDP. Residues 30–59 form a disordered region; sequence NSQVPAERPRTVSRTSDSDPAKHGEQHEGQ. Positions 45–59 are enriched in basic and acidic residues; sequence SDSDPAKHGEQHEGQ. 2 positions are modified to N6-acetyllysine: lysine 168 and lysine 200.

It belongs to the mitochondrion-specific ribosomal protein mS29 family. Component of the mitochondrial ribosome small subunit (28S) which comprises a 12S rRNA and about 30 distinct proteins. Interacts with DELE1. Interacts with NOA1.

It localises to the mitochondrion. The enzyme catalyses GTP + H2O = GDP + phosphate + H(+). Its function is as follows. As a component of the mitochondrial small ribosomal subunit, it plays a role in the translation of mitochondrial mRNAs. Involved in mediating interferon-gamma-induced cell death. Displays GTPase activity in vitro. The chain is Small ribosomal subunit protein mS29 from Mus musculus (Mouse).